The sequence spans 322 residues: Sideroflexin fsf1 (322 aa).

4 consecutive transmembrane segments (helical) span residues 143-163 (SYIY…KIVP), 175-195 (VLGR…NVFL), 229-249 (TALS…LVLM), and 269-289 (LGLI…VFPA).

This sequence belongs to the sideroflexin family.

The protein localises to the mitochondrion membrane. Its function is as follows. Mitochondrial amino-acid transporter that mediates transport of serine into mitochondria. This Schizosaccharomyces pombe (strain 972 / ATCC 24843) (Fission yeast) protein is Sideroflexin fsf1.